Reading from the N-terminus, the 812-residue chain is DNA translocase FtsK 1 (812 aa).

Residues 1–11 show a composition bias toward basic residues; that stretch reads MTEKSHKKTAK. Residues 1 to 36 form a disordered region; the sequence is MTEKSHKKTAKGRAGSPSPTSARNKKADNGARGNKV. Positions 25–36 are enriched in basic and acidic residues; sequence KKADNGARGNKV. Transmembrane regions (helical) follow at residues 63-83, 116-136, 156-176, 184-204, and 210-230; these read IGDALWLMGLAATLYLAISLI, VGYYLFGWSFWWWIAAACVVL, IAAAALFVLTVFSPVLEYFVL, LPVGAGGMVGIRVGAVFAWLL, and LLIILVVLLLSLSLLVQISWL. Residues 231–812 are Cytoplasmic-facing; the sequence is EFLNGAGRAV…RKILAHKDHL (582 aa). The FtsK domain maps to 461–670; that stretch reads GTPVVGDLAK…FTVQSKIDSR (210 aa). Residue 481–486 coordinates ATP; that stretch reads GSGKSV.

Belongs to the FtsK/SpoIIIE/SftA family. In terms of assembly, homohexamer. Forms a ring that surrounds DNA.

It is found in the cell inner membrane. In terms of biological role, essential cell division protein that coordinates cell division and chromosome segregation. The N-terminus is involved in assembly of the cell-division machinery. The C-terminus functions as a DNA motor that moves dsDNA in an ATP-dependent manner towards the dif recombination site, which is located within the replication terminus region. Translocation stops specifically at Xer-dif sites, where FtsK interacts with the Xer recombinase, allowing activation of chromosome unlinking by recombination. FtsK orienting polar sequences (KOPS) guide the direction of DNA translocation. FtsK can remove proteins from DNA as it translocates, but translocation stops specifically at XerCD-dif site, thereby preventing removal of XerC and XerD from dif. This chain is DNA translocase FtsK 1 (ftsK1), found in Neisseria meningitidis serogroup B (strain ATCC BAA-335 / MC58).